The sequence spans 303 residues: UDP-3-O-acyl-N-acetylglucosamine deacetylase (303 aa).

Zn(2+) contacts are provided by histidine 78, histidine 237, and aspartate 241. Histidine 264 functions as the Proton donor in the catalytic mechanism.

The protein belongs to the LpxC family. It depends on Zn(2+) as a cofactor.

The catalysed reaction is a UDP-3-O-[(3R)-3-hydroxyacyl]-N-acetyl-alpha-D-glucosamine + H2O = a UDP-3-O-[(3R)-3-hydroxyacyl]-alpha-D-glucosamine + acetate. Its pathway is glycolipid biosynthesis; lipid IV(A) biosynthesis; lipid IV(A) from (3R)-3-hydroxytetradecanoyl-[acyl-carrier-protein] and UDP-N-acetyl-alpha-D-glucosamine: step 2/6. Functionally, catalyzes the hydrolysis of UDP-3-O-myristoyl-N-acetylglucosamine to form UDP-3-O-myristoylglucosamine and acetate, the committed step in lipid A biosynthesis. This Stenotrophomonas maltophilia (strain R551-3) protein is UDP-3-O-acyl-N-acetylglucosamine deacetylase.